The following is a 161-amino-acid chain: Endoribonuclease YbeY (161 aa).

Zn(2+) contacts are provided by H121, H125, and H131.

This sequence belongs to the endoribonuclease YbeY family. Zn(2+) is required as a cofactor.

Its subcellular location is the cytoplasm. In terms of biological role, single strand-specific metallo-endoribonuclease involved in late-stage 70S ribosome quality control and in maturation of the 3' terminus of the 16S rRNA. The sequence is that of Endoribonuclease YbeY from Xanthomonas campestris pv. campestris (strain 8004).